Consider the following 31-residue polypeptide: U14-ctenitoxin-Co1a (31 aa).

Disulfide bonds are present. In terms of tissue distribution, expressed by the venom gland.

The protein localises to the secreted. Functionally, omega-agatoxins are antagonists of voltage-gated calcium channels (Cav). In Ctenus ornatus (Brazilian spider), this protein is U14-ctenitoxin-Co1a.